The primary structure comprises 432 residues: Adenylosuccinate synthetase (432 aa).

GTP-binding positions include 13 to 19 and 41 to 43; these read GDEGKGK and GHT. Asp-14 acts as the Proton acceptor in catalysis. Mg(2+) is bound by residues Asp-14 and Gly-41. IMP contacts are provided by residues 14-17, 39-42, Thr-130, Arg-144, Gln-225, Thr-240, and Arg-304; these read DEGK and NAGH. His-42 (proton donor) is an active-site residue. 300 to 306 is a substrate binding site; it reads ATTGRSR. Residues Arg-306, 332 to 334, and 415 to 417 each bind GTP; these read KLD and STG.

It belongs to the adenylosuccinate synthetase family. In terms of assembly, homodimer. The cofactor is Mg(2+).

It is found in the cytoplasm. It catalyses the reaction IMP + L-aspartate + GTP = N(6)-(1,2-dicarboxyethyl)-AMP + GDP + phosphate + 2 H(+). The protein operates within purine metabolism; AMP biosynthesis via de novo pathway; AMP from IMP: step 1/2. In terms of biological role, plays an important role in the de novo pathway of purine nucleotide biosynthesis. Catalyzes the first committed step in the biosynthesis of AMP from IMP. In Yersinia enterocolitica serotype O:8 / biotype 1B (strain NCTC 13174 / 8081), this protein is Adenylosuccinate synthetase.